Consider the following 179-residue polypeptide: Large ribosomal subunit protein uL5 (179 aa).

Belongs to the universal ribosomal protein uL5 family. As to quaternary structure, part of the 50S ribosomal subunit; part of the 5S rRNA/L5/L18/L25 subcomplex. Contacts the 5S rRNA and the P site tRNA. Forms a bridge to the 30S subunit in the 70S ribosome.

In terms of biological role, this is one of the proteins that bind and probably mediate the attachment of the 5S RNA into the large ribosomal subunit, where it forms part of the central protuberance. In the 70S ribosome it contacts protein S13 of the 30S subunit (bridge B1b), connecting the 2 subunits; this bridge is implicated in subunit movement. Contacts the P site tRNA; the 5S rRNA and some of its associated proteins might help stabilize positioning of ribosome-bound tRNAs. The polypeptide is Large ribosomal subunit protein uL5 (Salmonella arizonae (strain ATCC BAA-731 / CDC346-86 / RSK2980)).